The sequence spans 486 residues: Cardiolipin synthase A (486 aa).

The next 2 helical transmembrane spans lie at 3–23 (TFYTVVSWLVILGYWLLIAGV) and 38–58 (MAWLLIIYILPLVGIIAYLSF). PLD phosphodiesterase domains follow at residues 219 to 246 (MDLRQHRKMIMIDNYIAYTGSMNMVDPR) and 399 to 426 (EGGLLHTKSVLVDGELSLVGTVNLDMRS). Active-site residues include His-224, Lys-226, Asp-231, His-404, Lys-406, and Asp-411.

This sequence belongs to the phospholipase D family. Cardiolipin synthase subfamily. ClsA sub-subfamily.

The protein resides in the cell inner membrane. The catalysed reaction is 2 a 1,2-diacyl-sn-glycero-3-phospho-(1'-sn-glycerol) = a cardiolipin + glycerol. Functionally, catalyzes the reversible phosphatidyl group transfer from one phosphatidylglycerol molecule to another to form cardiolipin (CL) (diphosphatidylglycerol) and glycerol. The polypeptide is Cardiolipin synthase A (Escherichia fergusonii (strain ATCC 35469 / DSM 13698 / CCUG 18766 / IAM 14443 / JCM 21226 / LMG 7866 / NBRC 102419 / NCTC 12128 / CDC 0568-73)).